We begin with the raw amino-acid sequence, 188 residues long: uncharacterized protein (188 aa).

It localises to the plastid. The protein localises to the cyanelle. This is an uncharacterized protein from Cyanophora paradoxa.